The following is a 429-amino-acid chain: D-amino acid dehydrogenase (429 aa).

3-17 (VVVLGSGVVGVTSAY) contacts FAD.

Belongs to the DadA oxidoreductase family. FAD serves as cofactor.

The catalysed reaction is a D-alpha-amino acid + A + H2O = a 2-oxocarboxylate + AH2 + NH4(+). The protein operates within amino-acid degradation; D-alanine degradation; NH(3) and pyruvate from D-alanine: step 1/1. In terms of biological role, oxidative deamination of D-amino acids. This Paraburkholderia xenovorans (strain LB400) protein is D-amino acid dehydrogenase.